The following is a 206-amino-acid chain: Transmembrane emp24 domain-containing protein bai (206 aa).

An N-terminal signal peptide occupies residues 1-20 (MARTLLILCTLMAWAWTGEA). Over 21–172 (VMFKLTPNTQ…RDTNEKTNSR (152 aa)) the chain is Lumenal. The 111-residue stretch at 30–140 (QKCLKEDIQA…LKPLEVDLKR (111 aa)) folds into the GOLD domain. A helical membrane pass occupies residues 173–193 (VLFFSIFSMCCLLGLATWQVL). Residues 194–206 (YLRRYFKAKKLIE) are Cytoplasmic-facing.

The protein belongs to the EMP24/GP25L family.

It is found in the membrane. Functionally, eca and bai are essential, though not redundant, for dorsoventral patterning of the embryo. Specifically required during early embryogenesis for the activity of maternal tkv, while the zygotic tkv is not affected. This Drosophila ananassae (Fruit fly) protein is Transmembrane emp24 domain-containing protein bai.